The chain runs to 372 residues: Alanine dehydrogenase 1 (372 aa).

The active site involves His-94. 170–200 provides a ligand contact to NAD(+); sequence TYVIFGGGVAATNAANVALGLNAKVIIIELN.

This sequence belongs to the AlaDH/PNT family.

It carries out the reaction L-alanine + NAD(+) + H2O = pyruvate + NH4(+) + NADH + H(+). Its pathway is amino-acid degradation; L-alanine degradation via dehydrogenase pathway; NH(3) and pyruvate from L-alanine: step 1/1. In terms of biological role, may play a role in cell wall synthesis as L-alanine is an important constituent of the peptidoglycan layer. In Staphylococcus aureus (strain NCTC 8325 / PS 47), this protein is Alanine dehydrogenase 1 (ald1).